Here is a 386-residue protein sequence, read N- to C-terminus: Succinate--CoA ligase [ADP-forming] subunit beta (386 aa).

Positions Lys9–Arg244 constitute an ATP-grasp domain. Residues Lys46, Gly53–Gly55, Glu99, Thr102, and Glu107 each bind ATP. Positions 199 and 213 each coordinate Mg(2+). Substrate is bound by residues Asn264 and Gly321–Val323.

Belongs to the succinate/malate CoA ligase beta subunit family. As to quaternary structure, heterotetramer of two alpha and two beta subunits. Requires Mg(2+) as cofactor.

It carries out the reaction succinate + ATP + CoA = succinyl-CoA + ADP + phosphate. It catalyses the reaction GTP + succinate + CoA = succinyl-CoA + GDP + phosphate. It participates in carbohydrate metabolism; tricarboxylic acid cycle; succinate from succinyl-CoA (ligase route): step 1/1. Succinyl-CoA synthetase functions in the citric acid cycle (TCA), coupling the hydrolysis of succinyl-CoA to the synthesis of either ATP or GTP and thus represents the only step of substrate-level phosphorylation in the TCA. The beta subunit provides nucleotide specificity of the enzyme and binds the substrate succinate, while the binding sites for coenzyme A and phosphate are found in the alpha subunit. The protein is Succinate--CoA ligase [ADP-forming] subunit beta of Thioalkalivibrio sulfidiphilus (strain HL-EbGR7).